The primary structure comprises 192 residues: MGVPDCLALPLLVTFLLLSLGLPVLGAPPRLICDSRVLERYILEAKEAENITMGCAEGPRFNENFTVPDTKVNFYAWKTMGVEEQAVEVWQGLSLLFEAILQAQAVLANSSQPSEMLQLHVDKAISGLRSLTSLLRALGAQKEAISPPDTTQVIPLRRFTVDTFCKLFRIYSNFLRGKLKLYTGEACRRGDR.

The signal sequence occupies residues 1–26; that stretch reads MGVPDCLALPLLVTFLLLSLGLPVLG. An intrachain disulfide couples C33 to C187. N50, N64, and N109 each carry an N-linked (GlcNAc...) asparagine glycan.

This sequence belongs to the EPO/TPO family.

It is found in the secreted. Functionally, hormone involved in the regulation of erythrocyte proliferation and differentiation and the maintenance of a physiological level of circulating erythrocyte mass. Binds to EPOR leading to EPOR dimerization and JAK2 activation thereby activating specific downstream effectors, including STAT1 and STAT3. The polypeptide is Erythropoietin (EPO) (Spalax golani (Golan Heights blind mole rat)).